Consider the following 462-residue polypeptide: ATP synthase subunit beta 2 (462 aa).

Position 151–158 (151–158 (GGAGVGKT)) interacts with ATP.

The protein belongs to the ATPase alpha/beta chains family. F-type ATPases have 2 components, CF(1) - the catalytic core - and CF(0) - the membrane proton channel. CF(1) has five subunits: alpha(3), beta(3), gamma(1), delta(1), epsilon(1). CF(0) has three main subunits: a(1), b(2) and c(9-12). The alpha and beta chains form an alternating ring which encloses part of the gamma chain. CF(1) is attached to CF(0) by a central stalk formed by the gamma and epsilon chains, while a peripheral stalk is formed by the delta and b chains.

The protein resides in the cell inner membrane. It catalyses the reaction ATP + H2O + 4 H(+)(in) = ADP + phosphate + 5 H(+)(out). Its function is as follows. Produces ATP from ADP in the presence of a proton gradient across the membrane. The catalytic sites are hosted primarily by the beta subunits. The sequence is that of ATP synthase subunit beta 2 from Chlorobaculum tepidum (strain ATCC 49652 / DSM 12025 / NBRC 103806 / TLS) (Chlorobium tepidum).